Consider the following 281-residue polypeptide: BURP domain-containing protein BNM2C (281 aa).

The first 25 residues, 1–25, serve as a signal peptide directing secretion; the sequence is MASLRFSVTFPALFSLLLSLWVVDA. Residues 59 to 281 form the BURP domain; it reads FFKISDLKLG…PLDNIVWVSK (223 aa).

As to expression, expressed in the radicle of germinating seeds 2 days post-imbibition (DPI) and in roots of 30-DPI young plants. Expressed in the embryo and seed coat tissues of developing seeds. The protein accumulates only in seeds and only long after transcript accumulation becomes evident.

The protein localises to the protein storage vacuole. In Brassica napus (Rape), this protein is BURP domain-containing protein BNM2C.